Here is a 161-residue protein sequence, read N- to C-terminus: Cytochrome c-type biogenesis protein CcmE (161 aa).

The Cytoplasmic segment spans residues 1-8; it reads MNPRRKKR. The helical; Signal-anchor for type II membrane protein transmembrane segment at 9-29 threads the bilayer; sequence LTLAIALIGGVAAIASLLLYA. Residues 30–161 lie on the Periplasmic side of the membrane; it reads LNSNLNLFYT…DYSQQKSAAQ (132 aa). 2 residues coordinate heme: histidine 131 and tyrosine 135. Residues 138–161 form a disordered region; that stretch reads PEVAEAMGQKHEKLDYSQQKSAAQ.

The protein belongs to the CcmE/CycJ family.

It localises to the cell inner membrane. Heme chaperone required for the biogenesis of c-type cytochromes. Transiently binds heme delivered by CcmC and transfers the heme to apo-cytochromes in a process facilitated by CcmF and CcmH. This is Cytochrome c-type biogenesis protein CcmE from Shewanella sp. (strain MR-4).